The chain runs to 352 residues: Phosphoribosylformylglycinamidine cyclo-ligase (352 aa).

Belongs to the AIR synthase family.

The protein localises to the cytoplasm. The enzyme catalyses 2-formamido-N(1)-(5-O-phospho-beta-D-ribosyl)acetamidine + ATP = 5-amino-1-(5-phospho-beta-D-ribosyl)imidazole + ADP + phosphate + H(+). It functions in the pathway purine metabolism; IMP biosynthesis via de novo pathway; 5-amino-1-(5-phospho-D-ribosyl)imidazole from N(2)-formyl-N(1)-(5-phospho-D-ribosyl)glycinamide: step 2/2. The protein is Phosphoribosylformylglycinamidine cyclo-ligase of Coxiella burnetii (strain RSA 331 / Henzerling II).